Here is a 590-residue protein sequence, read N- to C-terminus: Aspartate--tRNA(Asp/Asn) ligase (590 aa).

Position 175 (Glu175) interacts with L-aspartate. The aspartate stretch occupies residues 199-202; sequence QQYK. L-aspartate is bound by residues Arg221 and His450. 221 to 223 contacts ATP; that stretch reads RDE. Glu484 is a binding site for ATP. Arg491 contributes to the L-aspartate binding site. Residue 536–539 participates in ATP binding; it reads GVDR.

It belongs to the class-II aminoacyl-tRNA synthetase family. Type 1 subfamily. As to quaternary structure, homodimer.

It is found in the cytoplasm. It catalyses the reaction tRNA(Asx) + L-aspartate + ATP = L-aspartyl-tRNA(Asx) + AMP + diphosphate. Its function is as follows. Aspartyl-tRNA synthetase with relaxed tRNA specificity since it is able to aspartylate not only its cognate tRNA(Asp) but also tRNA(Asn). Reaction proceeds in two steps: L-aspartate is first activated by ATP to form Asp-AMP and then transferred to the acceptor end of tRNA(Asp/Asn). This Rhodopseudomonas palustris (strain HaA2) protein is Aspartate--tRNA(Asp/Asn) ligase.